We begin with the raw amino-acid sequence, 249 residues long: Selenoprotein BthD (249 aa).

Residues methionine 1 to leucine 22 are disordered. The segment covering lysine 8–glycine 19 has biased composition (basic and acidic residues). Positions cysteine 34–selenocysteine 37 form a cross-link, cysteinyl-selenocysteine (Cys-Sec); redox-active. Position 37 (selenocysteine 37) is a non-standard amino acid, selenocysteine. The disordered stretch occupies residues glutamine 122–arginine 249. Serine 147 bears the Phosphoserine mark. A compositionally biased stretch (basic and acidic residues) spans glutamate 175–lysine 198. Residues threonine 199–alanine 210 show a composition bias toward basic residues.

Expressed in the developing salivary gland at late stages of embryogenesis. Also expressed in brain, neuroblast and wing disk.

Its subcellular location is the cytoplasm. The protein resides in the secreted. May be involved in a redox-related process. Required for survival and specifically for salivary gland morphogenesis. This Drosophila melanogaster (Fruit fly) protein is Selenoprotein BthD (BthD).